Consider the following 414-residue polypeptide: Snake venom metalloproteinase atrolysin-D (414 aa).

Residues 1-20 form the signal peptide; that stretch reads MIEVLLVTICLAVFPYQGSS. The propeptide occupies 21-190; sequence IILESGNVND…KASDLNLNPD (170 aa). Pyrrolidone carboxylic acid is present on Q191. Residues 197–393 enclose the Peptidase M12B domain; it reads RYIELVVVAD…YKPQCILNKP (197 aa). Ca(2+)-binding residues include E200 and D284. 2 disulfides stabilise this stretch: C308–C388 and C348–C355. H333 is a Zn(2+) binding site. Residue E334 is part of the active site. Residues H337 and H343 each contribute to the Zn(2+) site. Ca(2+)-binding residues include C388 and N391. Positions 394–414 are excised as a propeptide; sequence LRIDPVSTPVSGNELLEAGEE.

The protein belongs to the venom metalloproteinase (M12B) family. P-I subfamily. As to quaternary structure, monomer. Zn(2+) serves as cofactor. In terms of processing, the N-terminus is blocked. As to expression, expressed by the venom gland.

The protein resides in the secreted. It catalyses the reaction Cleavage of 5-His-|-Leu-6, 10-His-|-Leu-11, 14-Ala-|-Leu-15, 16-Tyr-|-Leu-17 and 23-Gly-|-Phe-24 of insulin B chain. With small molecule substrates prefers hydrophobic residue at P2' and small residue such as Ala, Gly at P1.. Snake venom zinc metalloproteinase that causes hemorrhage by provoking the degradation of the sub-endothelial matrix proteins (fibronectin, laminin, type IV collagen, nidogen, and gelatins). In Crotalus atrox (Western diamondback rattlesnake), this protein is Snake venom metalloproteinase atrolysin-D.